The following is a 192-amino-acid chain: MKTFALILAGGQASRMGGEDKGLALLGGKALIDHVIDRVRPQVSHIAISTNRNLEEYARRSPHIFPDARQWQHFGPLSALCTAANDLQLAAADWLLVVPCDMPYLPDDLVARFETVSKRTPLCNAYYVETPITMHYNIMYIRPQILQSAIPYLFSGMKTLRSWLQQQRARPVRFEFDGHFADLNTQIDLQEG.

GTP-binding positions include 8–10 (LAG), lysine 21, aspartate 67, and aspartate 101. Aspartate 101 provides a ligand contact to Mg(2+).

This sequence belongs to the MobA family. As to quaternary structure, monomer. Requires Mg(2+) as cofactor.

It is found in the cytoplasm. It catalyses the reaction Mo-molybdopterin + GTP + H(+) = Mo-molybdopterin guanine dinucleotide + diphosphate. In terms of biological role, transfers a GMP moiety from GTP to Mo-molybdopterin (Mo-MPT) cofactor (Moco or molybdenum cofactor) to form Mo-molybdopterin guanine dinucleotide (Mo-MGD) cofactor. This is Putative molybdenum cofactor guanylyltransferase from Neisseria meningitidis serogroup B (strain ATCC BAA-335 / MC58).